Consider the following 298-residue polypeptide: Formylmethanofuran--tetrahydromethanopterin formyltransferase (298 aa).

This sequence belongs to the FTR family. Homotetramer.

It is found in the cytoplasm. It catalyses the reaction N-formylmethanofuran + 5,6,7,8-tetrahydromethanopterin + H(+) = N(5)-formyl-5,6,7,8-tetrahydromethanopterin + methanofuran. It functions in the pathway one-carbon metabolism; formaldehyde degradation; formate from formaldehyde (H(4)MPT route): step 4/5. Its function is as follows. Catalyzes the transfer of a formyl group from 5-formyl tetrahydromethanopterin (5-formyl-H(4)MPT) to methanofuran (MFR) to produce formylmethanofuran (formyl-MFR) and tetrahydromethanopterin (H(4)MPT). The chain is Formylmethanofuran--tetrahydromethanopterin formyltransferase from Methylococcus capsulatus (strain ATCC 33009 / NCIMB 11132 / Bath).